Reading from the N-terminus, the 882-residue chain is Protein O-mannosyl-transferase TMTC1 (882 aa).

The Cytoplasmic portion of the chain corresponds to 1–20 (MVVTTSARGGGGDRTPSRRR). Residues 1–20 (MVVTTSARGGGGDRTPSRRR) form a disordered region. The helical transmembrane segment at 21–41 (GCGLAPAGAAALLAGASCLCY) threads the bilayer. Topologically, residues 42–110 (GRSLQGEFVH…KLNIFLTGMN (69 aa)) are extracellular. The N-linked (GlcNAc...) asparagine glycan is linked to Asn-86. Residues 111–131 (PFYFHAVNIILHCLVTLVLMY) form a helical membrane-spanning segment. Over 132 to 137 (TCDKTV) the chain is Cytoplasmic. The helical transmembrane segment at 138-157 (FKNRGLAFVTALLFAVHPIH) threads the bilayer. Residues 158-160 (TEA) are Extracellular-facing. The chain crosses the membrane as a helical span at residues 161–181 (VAGIVGRADVLACLLFLLAFL). Topologically, residues 182–197 (SYNRSLDQGCVGGSFP) are cytoplasmic. A helical transmembrane segment spans residues 198–218 (STVSPFFLLLSLFLGTCAMLV). Over 219–221 (KET) the chain is Extracellular. The helical transmembrane segment at 222-238 (GITVFGVCLVYDLFSLS) threads the bilayer. Topologically, residues 239–313 (NKQDKSSNGA…SPRAVWSMMR (75 aa)) are cytoplasmic. Residues 246–277 (NGALCPRSPQQPGSPQPSSLPGHPHRENGKQQ) form a disordered region. Residues 251-267 (PRSPQQPGSPQPSSLPG) are compositionally biased toward low complexity. The helical transmembrane segment at 314–334 (FLTYSYLLAFNVWLLLAPVTL) threads the bilayer. Topologically, residues 335–354 (CYDWQVGSIPLVETIWDMRN) are extracellular. Residues 355–375 (LATIFLAVVMALLSLHCLAAF) form a helical membrane-spanning segment. At 376–381 (KRLEHK) the chain is on the cytoplasmic side. A helical membrane pass occupies residues 382 to 402 (EVLVGLLFLVFPFIPASNLFF). Residue Arg-403 is a topological domain, extracellular. The chain crosses the membrane as a helical span at residues 404–424 (VGFVVAERVLYMPSMGYCILF). Residues 425–438 (VHGLSKLCTWLNRC) are Cytoplasmic-facing. A helical membrane pass occupies residues 439-459 (GATTLIVSTVLLLLLFSWKTV). At 460–882 (KQNEIWLSRE…LQEVREKDQT (423 aa)) the chain is on the extracellular side. 10 TPR repeats span residues 483–516 (AKVHYNYANFLKDQGRNKEAIYHYRTALKLYPRH), 517–547 (ASALNNLGTLTRDTAEAKMYYQRALQLHPQH), 548–581 (NRALFNLGNLLKSQEKKEEAITLLKDSIKYGPEF), 582–615 (ADAYSSLASLLAEQERFKEAEEIYQTGIKNCPDS), 616–649 (SDLHNNYGVFLVDTGLPEKAVAHYQQAIKLSPSH), 650–682 (HVAMVNLGRLYRSLGENSMAEEWYKRALQVAHK), 683–716 (AEILSPLGALYYNTGRYEEALQIYQEAAALQPSQ), 751–784 (LECYRLLSAIYSKQENHDKALDAIDKALQLKPKD), 789–822 (SELFFTKGNQLREQNLLDKAFESYRVAVQLNPDQ), and 823–856 (AQAWMNMGGIQHIKGKYVSARAYYERALQLVPDS).

The protein belongs to the TMTC family. As to quaternary structure, may interact with FAM168B.

The protein resides in the membrane. Its subcellular location is the endoplasmic reticulum. The catalysed reaction is a di-trans,poly-cis-dolichyl beta-D-mannosyl phosphate + L-seryl-[protein] = 3-O-(alpha-D-mannosyl)-L-seryl-[protein] + a di-trans,poly-cis-dolichyl phosphate + H(+). The enzyme catalyses a di-trans,poly-cis-dolichyl beta-D-mannosyl phosphate + L-threonyl-[protein] = 3-O-(alpha-D-mannosyl)-L-threonyl-[protein] + a di-trans,poly-cis-dolichyl phosphate + H(+). The protein operates within protein modification; protein glycosylation. Its function is as follows. Transfers mannosyl residues to the hydroxyl group of serine or threonine residues. The 4 members of the TMTC family are O-mannosyl-transferases dedicated primarily to the cadherin superfamily, each member seems to have a distinct role in decorating the cadherin domains with O-linked mannose glycans at specific regions. Also acts as O-mannosyl-transferase on other proteins such as PDIA3. The polypeptide is Protein O-mannosyl-transferase TMTC1 (Homo sapiens (Human)).